Consider the following 206-residue polypeptide: Large ribosomal subunit protein uL4 (206 aa).

Residues 46 to 77 (GTRAQKDREQVRHSTKKPFKQKGTGRARAGMT) form a disordered region. Residues 58 to 70 (HSTKKPFKQKGTG) are compositionally biased toward basic residues.

This sequence belongs to the universal ribosomal protein uL4 family. In terms of assembly, part of the 50S ribosomal subunit.

In terms of biological role, one of the primary rRNA binding proteins, this protein initially binds near the 5'-end of the 23S rRNA. It is important during the early stages of 50S assembly. It makes multiple contacts with different domains of the 23S rRNA in the assembled 50S subunit and ribosome. Its function is as follows. Forms part of the polypeptide exit tunnel. This Polaromonas naphthalenivorans (strain CJ2) protein is Large ribosomal subunit protein uL4.